Consider the following 314-residue polypeptide: Aspartate carbamoyltransferase catalytic subunit (314 aa).

The carbamoyl phosphate site is built by Arg-63 and Thr-64. Lys-91 lines the L-aspartate pocket. Residues Arg-113, His-143, and Gln-146 each contribute to the carbamoyl phosphate site. The L-aspartate site is built by Arg-176 and Arg-228. Ala-269 and Pro-270 together coordinate carbamoyl phosphate.

It belongs to the aspartate/ornithine carbamoyltransferase superfamily. ATCase family. In terms of assembly, heterododecamer (2C3:3R2) of six catalytic PyrB chains organized as two trimers (C3), and six regulatory PyrI chains organized as three dimers (R2).

The enzyme catalyses carbamoyl phosphate + L-aspartate = N-carbamoyl-L-aspartate + phosphate + H(+). Its pathway is pyrimidine metabolism; UMP biosynthesis via de novo pathway; (S)-dihydroorotate from bicarbonate: step 2/3. Its function is as follows. Catalyzes the condensation of carbamoyl phosphate and aspartate to form carbamoyl aspartate and inorganic phosphate, the committed step in the de novo pyrimidine nucleotide biosynthesis pathway. The polypeptide is Aspartate carbamoyltransferase catalytic subunit (Cutibacterium acnes (strain DSM 16379 / KPA171202) (Propionibacterium acnes)).